The chain runs to 427 residues: L-threonine dehydratase biosynthetic IlvA (427 aa).

Residue K63 is modified to N6-(pyridoxal phosphate)lysine. Pyridoxal 5'-phosphate contacts are provided by residues N90, 193–197 (GGGGC), and S319. One can recognise an ACT-like domain in the interval 343–417 (HYFLVDFPQK…TEMHVETLQP (75 aa)).

It belongs to the serine/threonine dehydratase family. In terms of assembly, homotetramer. Requires pyridoxal 5'-phosphate as cofactor.

It catalyses the reaction L-threonine = 2-oxobutanoate + NH4(+). The protein operates within amino-acid biosynthesis; L-isoleucine biosynthesis; 2-oxobutanoate from L-threonine: step 1/1. Its function is as follows. Catalyzes the anaerobic formation of alpha-ketobutyrate and ammonia from threonine in a two-step reaction. The first step involved a dehydration of threonine and a production of enamine intermediates (aminocrotonate), which tautomerizes to its imine form (iminobutyrate). Both intermediates are unstable and short-lived. The second step is the nonenzymatic hydrolysis of the enamine/imine intermediates to form 2-ketobutyrate and free ammonia. In the low water environment of the cell, the second step is accelerated by RidA. The polypeptide is L-threonine dehydratase biosynthetic IlvA (ilvA) (Mycobacterium leprae (strain TN)).